The sequence spans 122 residues: Protein 7a (122 aa).

Positions Met-1–Cys-15 are cleaved as a signal peptide. The 66-residue stretch at Glu-16–Ser-81 folds into the X4e domain. The Virion surface portion of the chain corresponds to Glu-16–Glu-96. 2 disulfides stabilise this stretch: Cys-23–Cys-58 and Cys-35–Cys-67. The helical transmembrane segment at Leu-97 to Ile-117 threads the bilayer. Residues Lys-118–Glu-122 are Intravirion-facing. The Di-lysine motif motif lies at Lys-118–Glu-122.

Interacts with the spike glycoprotein, M protein, E protein and the accessory protein 3.

The protein resides in the virion. Its subcellular location is the host endoplasmic reticulum membrane. It is found in the host endoplasmic reticulum-Golgi intermediate compartment membrane. It localises to the host Golgi apparatus membrane. Non-structural protein which is dispensable for virus replication in cell culture. The sequence is that of Protein 7a from Bat coronavirus HKU3 (BtCoV).